The chain runs to 543 residues: Zinc finger protein 280B (543 aa).

Methionine 1 is subject to N-acetylmethionine. A compositionally biased stretch (acidic residues) spans 1-10; it reads MEQSCEEEKE. The interval 1 to 23 is disordered; the sequence is MEQSCEEEKEPEPQKNIQETKQV. Serine 68 and serine 70 each carry phosphoserine. The interval 105–138 is disordered; the sequence is SQLESRSTDSPIIIEPLSKPDYRNSSPQVVPNNS. The span at 128–138 shows a compositional bias: low complexity; that stretch reads NSSPQVVPNNS. Glycyl lysine isopeptide (Lys-Gly) (interchain with G-Cter in SUMO2) cross-links involve residues lysine 173, lysine 247, and lysine 261. 4 consecutive C2H2-type zinc fingers follow at residues 343–366, 373–396, 432–454, and 460–483; these read TTCQ…ENVH, TVCK…KDHH, LLCP…YRGH, and HQCS…TQCH. Positions 518–543 are disordered; sequence ASITVSTSDSEPSLPRSKSKISKKSH. Positions 534–543 are enriched in basic residues; the sequence is SKSKISKKSH.

The protein resides in the nucleus. Functionally, may function as a transcription factor. This Homo sapiens (Human) protein is Zinc finger protein 280B (ZNF280B).